The sequence spans 293 residues: Aromatic amino acid exporter YddG (293 aa).

Topologically, residues 1-6 (MTRQKA) are cytoplasmic. The EamA 1 domain maps to 6 to 137 (ATLIGLIAIV…LALVGVCWVL (132 aa)). A helical membrane pass occupies residues 7 to 27 (TLIGLIAIVLWSTMVGLIRGV). Topologically, residues 28 to 33 (SEGLGP) are periplasmic. A helical membrane pass occupies residues 34–54 (VGGAAAIYSLSGLLLIFTVGF). The Cytoplasmic segment spans residues 55–62 (PRIRQIPK). Residues 63–83 (GYLLAGSLLFVSYEICLALSL) traverse the membrane as a helical segment. Residues 84–92 (GYAATHHQA) are Periplasmic-facing. Residues 93–113 (IEVGMVNYLWPSLTILFAILF) form a helical membrane-spanning segment. Over 114-118 (NGQKT) the chain is Cytoplasmic. A helical transmembrane segment spans residues 119–139 (NWLIVPGLLLALVGVCWVLGG). Residues 140 to 155 (DNGLHYDEIINNITTS) are Periplasmic-facing. The chain crosses the membrane as a helical span at residues 156 to 176 (PLSYFLAFIGAFIWAAYCTVT). An EamA 2 domain is found at 158-285 (SYFLAFIGAF…ALMVCGGSLL (128 aa)). At 177–182 (NKYARG) the chain is on the cytoplasmic side. A helical membrane pass occupies residues 183–203 (FNGITVFVLLTGASLWVYYFL). Residues 204–218 (TPQPEMIFSTPVMIK) are Periplasmic-facing. A helical transmembrane segment spans residues 219 to 239 (LISAAFTLGFAYAAWNVGILH). Residues 240-243 (GNVT) lie on the Cytoplasmic side of the membrane. The chain crosses the membrane as a helical span at residues 244 to 264 (IMAVGSYFTPVLSSALAAVLL). Residues 265-267 (SAP) are Periplasmic-facing. The helical transmembrane segment at 268–288 (LSFSFWQGALMVCGGSLLCWL) threads the bilayer. Over 289–293 (ATRRG) the chain is Cytoplasmic.

This sequence belongs to the drug/metabolite transporter (DMT) superfamily. Aromatic amino acid/paraquat exporter (ArAA/P-E) (TC 2.A.7.17) family.

It is found in the cell inner membrane. It catalyses the reaction L-phenylalanine(in) = L-phenylalanine(out). The catalysed reaction is L-tyrosine(in) = L-tyrosine(out). It carries out the reaction L-tryptophan(in) = L-tryptophan(out). The enzyme catalyses L-threonine(in) = L-threonine(out). It catalyses the reaction L-methionine(in) = L-methionine(out). The catalysed reaction is L-lysine(in) = L-lysine(out). It carries out the reaction L-glutamate(out) = L-glutamate(in). The enzyme catalyses L-valine(in) = L-valine(out). It catalyses the reaction L-isoleucine(in) = L-isoleucine(out). In terms of biological role, amino acid transporter with broad substrate specificity. Can transport various amino acids, including phenylalanine, tyrosine, tryptophan, L-threonine, L-methionine, L-lysine, L-glutamate, L-valine and L-isoleucine. Overexpression confers resistance to phenylalanine and increases export of phenylalanine, tyrosine and tryptophan. The polypeptide is Aromatic amino acid exporter YddG (yddG) (Escherichia coli (strain K12)).